A 276-amino-acid chain; its full sequence is N-acyl homoserine lactonase AiiB (276 aa).

Zn(2+) is bound by residues H111, H113, H116, H191, D213, and H259.

It belongs to the metallo-beta-lactamase superfamily. Zn(2+) is required as a cofactor.

It carries out the reaction an N-acyl-L-homoserine lactone + H2O = an N-acyl-L-homoserine + H(+). This chain is N-acyl homoserine lactonase AiiB, found in Agrobacterium fabrum (strain C58 / ATCC 33970) (Agrobacterium tumefaciens (strain C58)).